Reading from the N-terminus, the 67-residue chain is Large ribosomal subunit protein uL29 (67 aa).

This sequence belongs to the universal ribosomal protein uL29 family.

The chain is Large ribosomal subunit protein uL29 from Acetivibrio thermocellus (strain ATCC 27405 / DSM 1237 / JCM 9322 / NBRC 103400 / NCIMB 10682 / NRRL B-4536 / VPI 7372) (Clostridium thermocellum).